Consider the following 435-residue polypeptide: Putative acid phosphatase F26C11.1 (435 aa).

The active-site Nucleophile is H38. The active-site Proton donor is D317. C382 and C388 are oxidised to a cystine.

It belongs to the histidine acid phosphatase family.

It catalyses the reaction a phosphate monoester + H2O = an alcohol + phosphate. The polypeptide is Putative acid phosphatase F26C11.1 (Caenorhabditis elegans).